A 150-amino-acid polypeptide reads, in one-letter code: UPF0102 protein sll0189 (150 aa).

It belongs to the UPF0102 family.

The sequence is that of UPF0102 protein sll0189 from Synechocystis sp. (strain ATCC 27184 / PCC 6803 / Kazusa).